We begin with the raw amino-acid sequence, 92 residues long: Small ribosomal subunit protein uS19 (92 aa).

Belongs to the universal ribosomal protein uS19 family.

Its function is as follows. Protein S19 forms a complex with S13 that binds strongly to the 16S ribosomal RNA. The chain is Small ribosomal subunit protein uS19 from Francisella philomiragia subsp. philomiragia (strain ATCC 25017 / CCUG 19701 / FSC 153 / O#319-036).